A 20-amino-acid chain; its full sequence is Venom peptide Ocy8 (20 aa).

Expressed by the venom gland.

Its subcellular location is the secreted. The polypeptide is Venom peptide Ocy8 (Opisthacanthus cayaporum (South American scorpion)).